The chain runs to 519 residues: Golgi-associated kinase 1B (519 aa).

At 1-37 (MTCPDKPGQLINWFICSLCVPRVRKLWSSRRPRTRRN) the chain is on the cytoplasmic side. Residues 38 to 55 (LLLGTACAIYLGFLVSQV) traverse the membrane as a helical; Signal-anchor for type II membrane protein segment. At 56–519 (GRASLQHGQA…HGVKVLPMNE (464 aa)) the chain is on the extracellular side. The tract at residues 62–103 (HGQAAEKGPHRSRDTAEPSFPEIPLDGTLAPPESQGNGSTLQ) is disordered. The span at 68-77 (KGPHRSRDTA) shows a compositional bias: basic and acidic residues. An N-linked (GlcNAc...) asparagine glycan is attached at Asn-289.

This sequence belongs to the GASK family.

Its subcellular location is the golgi apparatus membrane. The sequence is that of Golgi-associated kinase 1B from Homo sapiens (Human).